Here is a 185-residue protein sequence, read N- to C-terminus: Ribosome-recycling factor (185 aa).

Belongs to the RRF family.

The protein resides in the cytoplasm. Responsible for the release of ribosomes from messenger RNA at the termination of protein biosynthesis. May increase the efficiency of translation by recycling ribosomes from one round of translation to another. The sequence is that of Ribosome-recycling factor from Enterobacter sp. (strain 638).